The primary structure comprises 600 residues: DDB1- and CUL4-associated factor 15 (600 aa).

The tract at residues 1-30 (MAPSSKSERNSGAGSGGGGPGGAGGKRAAG) is disordered. Residues 13–27 (AGSGGGGPGGAGGKR) are compositionally biased toward gly residues. Phosphoserine is present on Ser50. Cys193, Cys196, Cys211, and His214 together coordinate Zn(2+). E7820 is bound by residues Phe231 and 234 to 235 (AF). Pro residues predominate over residues 280-295 (PASPPEPQSPELPPAL). Residues 280–316 (PASPPEPQSPELPPALPSFCPEAAPARSSGSPEPSPA) are disordered. Phosphoserine is present on residues Ser310 and Ser314.

Component of the DCX(DCAF15) complex, also named CLR4(DCAF15) complex, composed of DCAF15, DDB1, cullin-4 (CUL4A or CUL4B), DDA1 and RBX1.

The protein operates within protein modification; protein ubiquitination. With respect to regulation, aryl sulfonamide anticancer drugs change the substrate specificity of DCAF15 by acting as a molecular glue that promotes binding between DCAF15 and weak affinity interactors, such as RBM39. Functionally, substrate-recognition component of the DCX(DCAF15) complex, a cullin-4-RING E3 ubiquitin-protein ligase complex that mediates ubiquitination and degradation of target proteins. The DCX(DCAF15) complex acts as a regulator of the natural killer (NK) cells effector functions, possibly by mediating ubiquitination and degradation of cohesin subunits SMC1A and SMC3. May play a role in the activation of antigen-presenting cells (APC) and their interaction with NK cells. In terms of biological role, binding of aryl sulfonamide anticancer drugs, such as indisulam (E7070) or E7820, change the substrate specificity of the DCX(DCAF15) complex, leading to promote ubiquitination and degradation of splicing factor RBM39. RBM39 degradation results in splicing defects and death in cancer cell lines. Aryl sulfonamide anticancer drugs change the substrate specificity of DCAF15 by acting as a molecular glue that promotes binding between DCAF15 and weak affinity interactor RBM39. Aryl sulfonamide anticancer drugs also promote ubiquitination and degradation of RBM23 and PRPF39. The sequence is that of DDB1- and CUL4-associated factor 15 from Homo sapiens (Human).